A 273-amino-acid chain; its full sequence is Pantothenate synthetase (273 aa).

Position 27–34 (27–34 (MGALHNGH)) interacts with ATP. His-34 serves as the catalytic Proton donor. Gln-58 contributes to the (R)-pantoate binding site. Gln-58 contacts beta-alanine. 144–147 (GKKD) lines the ATP pocket. Gln-150 is a (R)-pantoate binding site. ATP contacts are provided by residues Val-173 and 181-184 (LSSR).

This sequence belongs to the pantothenate synthetase family. As to quaternary structure, homodimer.

The protein resides in the cytoplasm. The catalysed reaction is (R)-pantoate + beta-alanine + ATP = (R)-pantothenate + AMP + diphosphate + H(+). It participates in cofactor biosynthesis; (R)-pantothenate biosynthesis; (R)-pantothenate from (R)-pantoate and beta-alanine: step 1/1. Its function is as follows. Catalyzes the condensation of pantoate with beta-alanine in an ATP-dependent reaction via a pantoyl-adenylate intermediate. The protein is Pantothenate synthetase of Campylobacter fetus subsp. fetus (strain 82-40).